The sequence spans 121 residues: MKRINFSRAKQRALRAKRLHVKIRNLQLAANKPVLVITKTNAHIWAQLICYNKNITLASSSSVQLDLQNGNKDNARLVGVDIAKKALAQGFKQVIFNKNGAKYHGRIKALADAAREAGLEF.

Belongs to the universal ribosomal protein uL18 family. Part of the 50S ribosomal subunit; part of the 5S rRNA/L5/L18/L25 subcomplex. Contacts the 5S and 23S rRNAs.

This is one of the proteins that bind and probably mediate the attachment of the 5S RNA into the large ribosomal subunit, where it forms part of the central protuberance. The chain is Large ribosomal subunit protein uL18 from Ureaplasma parvum serovar 3 (strain ATCC 27815 / 27 / NCTC 11736).